Consider the following 274-residue polypeptide: NADPH-dependent 7-cyano-7-deazaguanine reductase (274 aa).

81–83 (IES) provides a ligand contact to substrate. Position 83–84 (83–84 (SK)) interacts with NADPH. C182 acts as the Thioimide intermediate in catalysis. The active-site Proton donor is the D189. 221–222 (HE) lines the substrate pocket. 250–251 (RG) serves as a coordination point for NADPH.

The protein belongs to the GTP cyclohydrolase I family. QueF type 2 subfamily. As to quaternary structure, homodimer.

The protein localises to the cytoplasm. The catalysed reaction is 7-aminomethyl-7-carbaguanine + 2 NADP(+) = 7-cyano-7-deazaguanine + 2 NADPH + 3 H(+). It participates in tRNA modification; tRNA-queuosine biosynthesis. In terms of biological role, catalyzes the NADPH-dependent reduction of 7-cyano-7-deazaguanine (preQ0) to 7-aminomethyl-7-deazaguanine (preQ1). This is NADPH-dependent 7-cyano-7-deazaguanine reductase from Hahella chejuensis (strain KCTC 2396).